A 148-amino-acid polypeptide reads, in one-letter code: Iron/alpha-ketoglutarate-dependent dioxygenase ausU (148 aa).

Residues histidine 45 and aspartate 47 each contribute to the Fe cation site.

Belongs to the PhyH family. As to quaternary structure, homodimer. It depends on Fe cation as a cofactor.

The protein operates within secondary metabolite biosynthesis; terpenoid biosynthesis. In terms of biological role, iron/alpha-ketoglutarate-dependent dioxygenase; part of the gene cluster B that mediates the biosynthesis of austinol and dehydroaustinol, two fungal meroterpenoids. The first step of the pathway is the synthesis of 3,5-dimethylorsellinic acid by the polyketide synthase ausA. 3,5-dimethylorsellinic acid is then prenylated by the polyprenyl transferase ausN. Further epoxidation by the FAD-dependent monooxygenase ausM and cyclization by the probable terpene cyclase ausL lead to the formation of protoaustinoid A. Protoaustinoid A is then oxidized to spiro-lactone preaustinoid A3 by the combined action of the FAD-binding monooxygenases ausB and ausC, and the dioxygenase ausE. Acid-catalyzed keto-rearrangement and ring contraction of the tetraketide portion of preaustinoid A3 by ausJ lead to the formation of preaustinoid A4. The aldo-keto reductase ausK, with the help of ausH, is involved in the next step by transforming preaustinoid A4 into isoaustinone which is in turn hydroxylated by the P450 monooxygenase ausI to form austinolide. Finally, the cytochrome P450 monooxygenase ausG modifies austinolide to austinol. Austinol can be further modified to dehydroaustinol which forms a diffusible complex with diorcinol that initiates conidiation. Due to genetic rearrangements of the clusters and the subsequent loss of some enzymes, the end products of the Emericella nidulans austinoid biosynthesis clusters are austinol and dehydroaustinol, even if additional enzymes, such as the O-acetyltransferase ausQ and the cytochrome P450 monooxygenase ausR are still functional. In Emericella nidulans (strain FGSC A4 / ATCC 38163 / CBS 112.46 / NRRL 194 / M139) (Aspergillus nidulans), this protein is Iron/alpha-ketoglutarate-dependent dioxygenase ausU.